Here is a 465-residue protein sequence, read N- to C-terminus: Pleckstrin homology domain-containing family S member 1 (465 aa).

The PH domain occupies 14 to 129 (EVCKQDYFIK…WVSFMSSFRQ (116 aa)). Residues 159–173 (PSSTSEAVGSSSPRN) show a composition bias toward polar residues. Disordered regions lie at residues 159–179 (PSST…QDKH) and 258–283 (ETSH…GDLH). Residues 258–271 (ETSHESVDSSKEEP) show a composition bias toward basic and acidic residues.

This is Pleckstrin homology domain-containing family S member 1 from Homo sapiens (Human).